The chain runs to 480 residues: ATP synthase subunit beta (480 aa).

152–159 (GGAGVGKT) lines the ATP pocket.

The protein belongs to the ATPase alpha/beta chains family. F-type ATPases have 2 components, CF(1) - the catalytic core - and CF(0) - the membrane proton channel. CF(1) has five subunits: alpha(3), beta(3), gamma(1), delta(1), epsilon(1). CF(0) has three main subunits: a(1), b(2) and c(9-12). The alpha and beta chains form an alternating ring which encloses part of the gamma chain. CF(1) is attached to CF(0) by a central stalk formed by the gamma and epsilon chains, while a peripheral stalk is formed by the delta and b chains.

Its subcellular location is the cell membrane. It catalyses the reaction ATP + H2O + 4 H(+)(in) = ADP + phosphate + 5 H(+)(out). Produces ATP from ADP in the presence of a proton gradient across the membrane. The catalytic sites are hosted primarily by the beta subunits. The polypeptide is ATP synthase subunit beta (Wolbachia sp. subsp. Brugia malayi (strain TRS)).